A 301-amino-acid chain; its full sequence is Formylmethanofuran--tetrahydromethanopterin formyltransferase-like protein (301 aa).

This sequence belongs to the FTR family.

The protein is Formylmethanofuran--tetrahydromethanopterin formyltransferase-like protein of Archaeoglobus fulgidus (strain ATCC 49558 / DSM 4304 / JCM 9628 / NBRC 100126 / VC-16).